Reading from the N-terminus, the 284-residue chain is Ribosomal RNA small subunit methyltransferase A (284 aa).

Asparagine 27, leucine 29, glycine 54, glutamate 75, aspartate 100, and asparagine 125 together coordinate S-adenosyl-L-methionine.

This sequence belongs to the class I-like SAM-binding methyltransferase superfamily. rRNA adenine N(6)-methyltransferase family. RsmA subfamily.

Its subcellular location is the cytoplasm. It catalyses the reaction adenosine(1518)/adenosine(1519) in 16S rRNA + 4 S-adenosyl-L-methionine = N(6)-dimethyladenosine(1518)/N(6)-dimethyladenosine(1519) in 16S rRNA + 4 S-adenosyl-L-homocysteine + 4 H(+). Its function is as follows. Specifically dimethylates two adjacent adenosines (A1518 and A1519) in the loop of a conserved hairpin near the 3'-end of 16S rRNA in the 30S particle. May play a critical role in biogenesis of 30S subunits. The chain is Ribosomal RNA small subunit methyltransferase A from Protochlamydia amoebophila (strain UWE25).